The chain runs to 557 residues: MVLSDIEIANSVTMEPISKVADQLGIDKETLCLYGKYKAKIDARQLVALKDKPDGKLILVTAISPTPAGEGKTTTSVGLVDALSAIGKKAVIALREPSLGPVFGVKGGAAGGGHAQVVPMEDINLHFTGDFHAIGVANNLLAALIDNHIHHGNSLGIDSRRITWKRVVDMNDRQLRHIVDGLQGKVNGVPREDGYDITVASEIMAILCLSENISDLKARLEKIIIGYNFQGEPVTAKDLKAGGALAALLKDAIHPNLVQTLEHTPALIHGGPFANIAHGCNSVLATKLALKYGDYAVTEAGFGADLGAEKFIDIKCRMSGLRPAAVVLVATIRALKMHGGVPKADLATENVQAVVDGLPNLDKHLANIQDVYGLPVVVAINKFPLDTDAELQAVYDACDKRGVDVVISDVWANGGAGGRELAEKVVALAEQDNQFRFVYNEDDSIETKLTKIVTKIYGGKGIKLTPTAKRELAELERLGFGNYPICMAKTQYSFSDDAKKLGAPTDFIVTISNLKVSAGAGFIVALTGAIMTMPGLPKVPASETIDIDEEGNITGLF.

Residue 66–73 participates in ATP binding; the sequence is TPAGEGKT.

The protein belongs to the formate--tetrahydrofolate ligase family.

It carries out the reaction (6S)-5,6,7,8-tetrahydrofolate + formate + ATP = (6R)-10-formyltetrahydrofolate + ADP + phosphate. The protein operates within one-carbon metabolism; tetrahydrofolate interconversion. In Streptococcus pyogenes serotype M6 (strain ATCC BAA-946 / MGAS10394), this protein is Formate--tetrahydrofolate ligase 2.